Consider the following 123-residue polypeptide: Basic myotoxic phospholipase A2 PhTX-II (123 aa).

Disulfide bonds link Cys-26–Cys-116, Cys-28–Cys-45, Cys-44–Cys-95, Cys-50–Cys-123, Cys-51–Cys-88, Cys-58–Cys-81, and Cys-75–Cys-86. Ca(2+) is bound by residues Tyr-27, Gly-29, and Gly-31. His-48 is an active-site residue. Asp-49 is a Ca(2+) binding site. Residue Asp-89 is part of the active site.

In terms of assembly, monomer. Ca(2+) serves as cofactor. Expressed by the venom gland.

Its subcellular location is the secreted. It catalyses the reaction a 1,2-diacyl-sn-glycero-3-phosphocholine + H2O = a 1-acyl-sn-glycero-3-phosphocholine + a fatty acid + H(+). P-bromophenacyl bromide (BPB) completely inhibits the catalytic and edematogenic activities. Enzymatic activity is also diminished by EDTA, heparin and crotapotins F2 and F3 from C.d.collilineatus. Inhibited by divalent cations different from calcium ions (cadmium, magnesium, manganese, zinc), since they act as competitive antagonists of this cofactor. In terms of biological role, snake venom phospholipase A2 (PLA2) that induces myotoxicity and local edema in mice. In addition, it causes neuromuscular blockade in avian neuromuscular preparations with a significant direct action on skeletal muscle function. Myotoxic action is exerted by both enzymatic and non-enzymatic mechanisms. PLA2 catalyzes the calcium-dependent hydrolysis of the 2-acyl groups in 3-sn-phosphoglycerides. This chain is Basic myotoxic phospholipase A2 PhTX-II, found in Bothrocophias hyoprora (Amazonian hognose viper).